Reading from the N-terminus, the 111-residue chain is Flagellar hook-basal body complex protein FliE (111 aa).

This sequence belongs to the FliE family.

It is found in the bacterial flagellum basal body. The protein is Flagellar hook-basal body complex protein FliE of Clostridium acetobutylicum (strain ATCC 824 / DSM 792 / JCM 1419 / IAM 19013 / LMG 5710 / NBRC 13948 / NRRL B-527 / VKM B-1787 / 2291 / W).